The following is a 493-amino-acid chain: Xylulose kinase (493 aa).

A substrate-binding site is contributed by 84–85 (QH). Residue Asp247 is the Proton acceptor of the active site.

It belongs to the FGGY kinase family.

It catalyses the reaction D-xylulose + ATP = D-xylulose 5-phosphate + ADP + H(+). Catalyzes the phosphorylation of D-xylulose to D-xylulose 5-phosphate. This is Xylulose kinase from Haemophilus influenzae (strain ATCC 51907 / DSM 11121 / KW20 / Rd).